A 339-amino-acid chain; its full sequence is Fructose-1,6-bisphosphatase isozyme 2 (339 aa).

Residues 3 to 10 (DRSPFETD) are important for interaction with ALDOA. AMP is bound by residues V18 and 28-32 (TGELT). 2 residues coordinate Mg(2+): D69 and E98. Residue 113–114 (KY) coordinates AMP. 3 residues coordinate Mg(2+): D119, L121, and D122. Substrate is bound at residue D122. An AMP-binding site is contributed by R141. Residues 204–208 (KKKGK) carry the Nuclear localization signal motif. A substrate-binding site is contributed by 213–216 (NEGY). Y216 and Y219 each carry phosphotyrosine. Substrate-binding positions include 245-249 (YVGSM), Y265, and K275. E281 is a Mg(2+) binding site.

The protein belongs to the FBPase class 1 family. In terms of assembly, homotetramer. Interacts with ALDOA; the interaction blocks inhibition by physiological concentrations of AMP and reduces inhibition by Ca(2+). Interacts with alpha-actinin and F-actin. Requires Mg(2+) as cofactor.

The protein localises to the cell junction. The protein resides in the cytoplasm. Its subcellular location is the nucleus. It is found in the myofibril. It localises to the sarcomere. The protein localises to the z line. It carries out the reaction beta-D-fructose 1,6-bisphosphate + H2O = beta-D-fructose 6-phosphate + phosphate. It functions in the pathway carbohydrate biosynthesis; gluconeogenesis. Subject to complex allosteric regulation. The enzyme can assume an active R-state, or an inactive T-state. Intermediate conformations may exist. AMP acts as an allosteric inhibitor. Fructose 2,6-bisphosphate acts as a competitive inhibitor. Strongly inhibited by Ca(2+). In terms of biological role, catalyzes the hydrolysis of fructose 1,6-bisphosphate to fructose 6-phosphate in the presence of divalent cations and probably participates in glycogen synthesis from carbohydrate precursors, such as lactate. The protein is Fructose-1,6-bisphosphatase isozyme 2 (Fbp2) of Rattus norvegicus (Rat).